The primary structure comprises 188 residues: Xanthine phosphoribosyltransferase (188 aa).

Xanthine is bound by residues Leu-20 and Asn-27. A 5-phospho-alpha-D-ribose 1-diphosphate-binding site is contributed by 127–131; that stretch reads ANGNA. Lys-155 provides a ligand contact to xanthine.

It belongs to the purine/pyrimidine phosphoribosyltransferase family. Xpt subfamily. In terms of assembly, homodimer.

The protein localises to the cytoplasm. The catalysed reaction is XMP + diphosphate = xanthine + 5-phospho-alpha-D-ribose 1-diphosphate. It participates in purine metabolism; XMP biosynthesis via salvage pathway; XMP from xanthine: step 1/1. Its function is as follows. Converts the preformed base xanthine, a product of nucleic acid breakdown, to xanthosine 5'-monophosphate (XMP), so it can be reused for RNA or DNA synthesis. The polypeptide is Xanthine phosphoribosyltransferase (Phocaeicola vulgatus (strain ATCC 8482 / DSM 1447 / JCM 5826 / CCUG 4940 / NBRC 14291 / NCTC 11154) (Bacteroides vulgatus)).